Reading from the N-terminus, the 355-residue chain is N-acetyl-gamma-glutamyl-phosphate reductase (355 aa).

Cys152 is a catalytic residue.

This sequence belongs to the NAGSA dehydrogenase family. Type 1 subfamily.

It is found in the cytoplasm. It catalyses the reaction N-acetyl-L-glutamate 5-semialdehyde + phosphate + NADP(+) = N-acetyl-L-glutamyl 5-phosphate + NADPH + H(+). The protein operates within amino-acid biosynthesis; L-arginine biosynthesis; N(2)-acetyl-L-ornithine from L-glutamate: step 3/4. Catalyzes the NADPH-dependent reduction of N-acetyl-5-glutamyl phosphate to yield N-acetyl-L-glutamate 5-semialdehyde. In Psychrobacter cryohalolentis (strain ATCC BAA-1226 / DSM 17306 / VKM B-2378 / K5), this protein is N-acetyl-gamma-glutamyl-phosphate reductase.